Reading from the N-terminus, the 90-residue chain is Elongation factor 1-beta (90 aa).

Belongs to the EF-1-beta/EF-1-delta family.

In terms of biological role, promotes the exchange of GDP for GTP in EF-1-alpha/GDP, thus allowing the regeneration of EF-1-alpha/GTP that could then be used to form the ternary complex EF-1-alpha/GTP/AAtRNA. This Staphylothermus marinus (strain ATCC 43588 / DSM 3639 / JCM 9404 / F1) protein is Elongation factor 1-beta.